The sequence spans 214 residues: 3,4-dihydroxy-2-butanone 4-phosphate synthase (214 aa).

D-ribulose 5-phosphate contacts are provided by residues 37–38 (RE), aspartate 42, 150–154 (RRGHT), and glutamate 174. A Mg(2+)-binding site is contributed by glutamate 38. Histidine 153 lines the Mg(2+) pocket.

The protein belongs to the DHBP synthase family. Homodimer. Requires Mg(2+) as cofactor. It depends on Mn(2+) as a cofactor.

It catalyses the reaction D-ribulose 5-phosphate = (2S)-2-hydroxy-3-oxobutyl phosphate + formate + H(+). It participates in cofactor biosynthesis; riboflavin biosynthesis; 2-hydroxy-3-oxobutyl phosphate from D-ribulose 5-phosphate: step 1/1. Catalyzes the conversion of D-ribulose 5-phosphate to formate and 3,4-dihydroxy-2-butanone 4-phosphate. The sequence is that of 3,4-dihydroxy-2-butanone 4-phosphate synthase from Nitratidesulfovibrio vulgaris (strain ATCC 29579 / DSM 644 / CCUG 34227 / NCIMB 8303 / VKM B-1760 / Hildenborough) (Desulfovibrio vulgaris).